A 324-amino-acid chain; its full sequence is Phthalate 4,5-dioxygenase oxygenase reductase subunit (324 aa).

In terms of domain architecture, FAD-binding FR-type spans 9–111 (DGFTGLKVIA…ATPQNEFELI (103 aa)). 115 to 229 (RQFIFVAGGI…PGSIHFESFG (115 aa)) lines the NAD(+) pocket. Residues 241-324 (FSVTLGRSGI…ARNDVLVLDL (84 aa)) form the 2Fe-2S ferredoxin-type domain. The [2Fe-2S] cluster site is built by Cys275, Cys280, Cys283, and Cys311.

This sequence belongs to the PDR/VanB family. This dioxygenase system consists of two proteins: phthalate oxygenase and phthalate oxygenase reductase. It depends on FMN as a cofactor.

The enzyme catalyses phthalate + NADH + O2 + H(+) = cis-4,5-dihydroxycyclohexa-2,6-diene-1,2-dicarboxylate + NAD(+). It participates in xenobiotic degradation; phthalate degradation; 3,4-dihydroxybenzoate from phthalate: step 1/3. The protein is Phthalate 4,5-dioxygenase oxygenase reductase subunit (pht2) of Pseudomonas putida (Arthrobacter siderocapsulatus).